A 162-amino-acid chain; its full sequence is UPF0763 protein Sdel_0383 (162 aa).

It belongs to the UPF0763 family.

This Sulfurospirillum deleyianum (strain ATCC 51133 / DSM 6946 / 5175) protein is UPF0763 protein Sdel_0383.